The following is a 451-amino-acid chain: Tubulin gamma-1 chain (451 aa).

Residue serine 131 is modified to Phosphoserine; by BRSK1. 142-148 (AGGTGSG) is a binding site for GTP.

Belongs to the tubulin family. Component of the gamma-tubulin ring complex (gTuRC) consisting of TUBGCP2, TUBGCP3, TUBGCP4, TUBGCP5 and TUBGCP6 and gamma-tubulin TUBG1 or TUBG2. TUBGCP2, TUBGCP3, TUBGCP4, TUBGCP5 and TUBGCP6 assemble in a 5:5:2:1:1 stoichiometry; each is associated with a gamma-tubulin, thereby arranging 14 gamma-tubulins in a helical manner. Gamma-tubulin at the first position is blocked by TUBGCP3 at the last position, allowing 13 protafilaments to grow into a microtubule. The gTuRC (via TUBGCP3 and TUBGCP6) interacts with ACTB and MZT1; the interactions form a luminal bridge that stabilizes the initial structure during complex assembly. The gTuRC (via TUBGCP2) interacts with MZT2A/MZT2B and CDK5RAP2 (via CM1 motif); the interactions play a role in gTuRC activation. Interacts with alpha-beta tubulin heterodimers; the interaction allows microtubules to nucleate from the gTuRC. Interacts with B9D2. Interacts with CDK5RAP2; the interaction is leading to centrosomal localization of TUBG1 and CDK5RAP2. Interacts with CIMAP3. Interacts with SAS6 and NUP62 at the centrosome. Interacts with EML3 (phosphorylated at 'Thr-881') and HAUS8. Interacts with DNM2; this interaction may participate in centrosome cohesion. Interacts with CCDC66. Post-translationally, phosphorylation at Ser-131 by BRSK1 regulates centrosome duplication, possibly by mediating relocation of gamma-tubulin and its associated proteins from the cytoplasm to the centrosome.

The protein localises to the cytoplasm. Its subcellular location is the cytoskeleton. It localises to the microtubule organizing center. The protein resides in the centrosome. It is found in the spindle. Functionally, tubulin is the major constituent of microtubules, protein filaments consisting of alpha- and beta-tubulin heterodimers. Gamma-tubulin is a key component of the gamma-tubulin ring complex (gTuRC) which mediates microtubule nucleation. The gTuRC regulates the minus-end nucleation of alpha-beta tubulin heterodimers that grow into microtubule protafilaments, a critical step in centrosome duplication and spindle formation. This chain is Tubulin gamma-1 chain, found in Homo sapiens (Human).